A 452-amino-acid chain; its full sequence is Cell division protein FtsZ (452 aa).

GTP-binding positions include 24 to 28 (GAGSN), 111 to 113 (GTG), Glu-142, Arg-146, and Asp-190.

This sequence belongs to the FtsZ family. In terms of assembly, homodimer. Polymerizes to form a dynamic ring structure in a strictly GTP-dependent manner. Interacts directly with several other division proteins.

The protein resides in the cytoplasm. Functionally, essential cell division protein that forms a contractile ring structure (Z ring) at the future cell division site. The regulation of the ring assembly controls the timing and the location of cell division. One of the functions of the FtsZ ring is to recruit other cell division proteins to the septum to produce a new cell wall between the dividing cells. Binds GTP and shows GTPase activity. This chain is Cell division protein FtsZ, found in Rickettsia prowazekii (strain Madrid E).